The chain runs to 1334 residues: Adenylate cyclase type 9 (1334 aa).

2 disordered regions span residues 1 to 28 (MASP…SNSV) and 49 to 71 (ISSS…GLRR). Topologically, residues 1 to 113 (MASPPHQQLL…CFPQTQRRFR (113 aa)) are cytoplasmic. Residues 16-28 (EVSCDSSGDSNSV) show a composition bias toward polar residues. The span at 57-69 (ESGGVGRGGGGGL) shows a compositional bias: gly residues. The chain crosses the membrane as a helical span at residues 114–134 (YALFYIGSACLLWGIYFGVHM). Over 135-137 (REK) the chain is Extracellular. Residues 138–158 (QMVFMVPALCFLLVCVAFFAF) traverse the membrane as a helical segment. Residues 159-167 (TFTKAYARR) are Cytoplasmic-facing. The chain crosses the membrane as a helical span at residues 168 to 187 (YVWTSGYTLLVFALTLAPQF). The Extracellular portion of the chain corresponds to 188-207 (QPWTLGERQRVQPRPAAPVD). A helical transmembrane segment spans residues 208-227 (TCLSQVGSFSMCVEVLLLLY). Residues 228–233 (TVMHLP) lie on the Cytoplasmic side of the membrane. A helical membrane pass occupies residues 234–250 (LYLSLFLGLSYSVLFET). Residues 251–269 (SAFRDESCTLLGGGAVYWE) are Extracellular-facing. A helical transmembrane segment spans residues 270–290 (LLSKAFLHVCIHAIGIHLFIM). Residues 291–768 (SEVRSRSTFL…VKTFASATFS (478 aa)) lie on the Cytoplasmic side of the membrane. Residues 338–363 (QGDDESENSVKRHSTSSPKNRKKKPS) are disordered. Residues 348 to 363 (KRHSTSSPKNRKKKPS) show a composition bias toward basic residues. 3 residues coordinate Mg(2+): D388, I389, and D432. ATP-binding positions include 388-393 (DIVGFT), 430-432 (LGD), and R476. Residues 635–670 (GCQDEHKNSTKAPGGHSPKTQNGLLSPPQEEKLSNS) form a disordered region. Residues 769 to 789 (SLLDVFLSTTVFLILSVTCFL) form a helical membrane-spanning segment. The Extracellular segment spans residues 790–800 (KHGMVASPPPP). Residues 801 to 821 (AAVVVFVIAILLEVLSLVISV) traverse the membrane as a helical segment. Topologically, residues 822-849 (RMVFFLEEVMACTKRLLELISGWLPRHF) are cytoplasmic. Residues 850 to 870 (LGAILVSLPALAVFSHFTSDF) traverse the membrane as a helical segment. At 871 to 873 (ETN) the chain is on the extracellular side. Residues 874 to 894 (IHYTMFMCCAILIAIVQYCNF) form a helical membrane-spanning segment. The Cytoplasmic portion of the chain corresponds to 895–902 (CQLSSWMR). A helical membrane pass occupies residues 903 to 923 (SLLATVVGAVLLILLYVSLCP). Topologically, residues 924 to 957 (DSSVETLHLDLAQNLSSRKSPCNSSMPADVKRPA) are extracellular. N937 and N946 each carry an N-linked (GlcNAc...) asparagine glycan. A helical membrane pass occupies residues 958 to 978 (DLIGQEVILAVFLLLLLVWFL). Residues 979–1334 (NRSFEVSYRL…LTKLNVSKSV (356 aa)) lie on the Cytoplasmic side of the membrane. Residues K1090, 1167–1169 (DIW), 1174–1178 (NIASR), and K1214 contribute to the ATP site. The tract at residues 1266–1303 (SVQNSDKTAHATDNSETKDALPSSKKLQKEPTKAEERC) is disordered. Composition is skewed to basic and acidic residues over residues 1272–1284 (KTAH…ETKD) and 1292–1303 (LQKEPTKAEERC).

The protein belongs to the adenylyl cyclase class-4/guanylyl cyclase family. Requires Mg(2+) as cofactor. It depends on Mn(2+) as a cofactor. Detected in embryonic heart (at protein level).

The protein resides in the cell membrane. It localises to the membrane. The catalysed reaction is ATP = 3',5'-cyclic AMP + diphosphate. Its activity is regulated as follows. Insensitive to calcium/calmodulin, forskolin and somatostatin. Stimulated by beta-adrenergic receptor activation. Activity is down-regulated by calcium/calcineurin. Adenylyl cyclase that catalyzes the formation of the signaling molecule cAMP in response to activation of G protein-coupled receptors. In Gallus gallus (Chicken), this protein is Adenylate cyclase type 9 (ADCY9).